Reading from the N-terminus, the 186-residue chain is MDTFSTKSLALQAQKKLLSKMASKAVVAVLVDDTSSEVLDELYRATREFTRSRKEAQKMLKNLVKVALKLGLLLRGDQLGGEELALLRRFRHRARCLAMTAVSFHQVDFTFDRRVLAAGLLECRDLLHQAVGPHLTAKSHGRINHVFGHLADCDFLAALYGPAEPYRSHLRRICEGLGRMLDEGSL.

This sequence belongs to the TNFAIP8 family. Interacts with FBXW5; TNFAIP8L1 competes with TSC2 to bind FBXW5 increasing TSC2 stability by preventing its ubiquitination. In terms of tissue distribution, high expression detected in most carcinoma cell lines, especially in cells transformed with virus genomes.

Its subcellular location is the cytoplasm. Acts as a negative regulator of mTOR activity. This chain is Tumor necrosis factor alpha-induced protein 8-like protein 1 (TNFAIP8L1), found in Homo sapiens (Human).